The sequence spans 258 residues: Acetylglutamate kinase (258 aa).

Substrate is bound by residues 41–42, R63, and N156; that span reads GG.

It belongs to the acetylglutamate kinase family. ArgB subfamily.

It is found in the cytoplasm. The catalysed reaction is N-acetyl-L-glutamate + ATP = N-acetyl-L-glutamyl 5-phosphate + ADP. It participates in amino-acid biosynthesis; L-arginine biosynthesis; N(2)-acetyl-L-ornithine from L-glutamate: step 2/4. In terms of biological role, catalyzes the ATP-dependent phosphorylation of N-acetyl-L-glutamate. The protein is Acetylglutamate kinase of Bacillus licheniformis (strain ATCC 14580 / DSM 13 / JCM 2505 / CCUG 7422 / NBRC 12200 / NCIMB 9375 / NCTC 10341 / NRRL NRS-1264 / Gibson 46).